A 304-amino-acid chain; its full sequence is Non-specific ribonucleoside hydrolase RihC (304 aa).

The active site involves His-233.

It belongs to the IUNH family. RihC subfamily.

In terms of biological role, hydrolyzes both purine and pyrimidine ribonucleosides with a broad-substrate specificity. In Shigella boydii serotype 18 (strain CDC 3083-94 / BS512), this protein is Non-specific ribonucleoside hydrolase RihC.